The primary structure comprises 346 residues: Dihydroorotase (346 aa).

2 residues coordinate Zn(2+): His-13 and His-15. Substrate-binding positions include 15 to 17 and Asn-41; that span reads HLR. Positions 99, 136, and 174 each coordinate Zn(2+). The residue at position 99 (Lys-99) is an N6-carboxylysine. His-136 is a binding site for substrate. A substrate-binding site is contributed by Leu-219. A Zn(2+)-binding site is contributed by Asp-247. The active site involves Asp-247. Substrate contacts are provided by His-251 and Ala-263.

It belongs to the metallo-dependent hydrolases superfamily. DHOase family. Class II DHOase subfamily. Homodimer. Zn(2+) serves as cofactor.

It catalyses the reaction (S)-dihydroorotate + H2O = N-carbamoyl-L-aspartate + H(+). It functions in the pathway pyrimidine metabolism; UMP biosynthesis via de novo pathway; (S)-dihydroorotate from bicarbonate: step 3/3. Its function is as follows. Catalyzes the reversible cyclization of carbamoyl aspartate to dihydroorotate. This is Dihydroorotase from Picosynechococcus sp. (strain ATCC 27264 / PCC 7002 / PR-6) (Agmenellum quadruplicatum).